Reading from the N-terminus, the 590-residue chain is Acetolactate synthase large subunit (590 aa).

Glu61 serves as a coordination point for thiamine diphosphate. Residues Arg163, His271–Arg292, and Asp314–Asp333 each bind FAD. Residues Gln405–Trp484 are thiamine pyrophosphate binding. The Mg(2+) site is built by Asp455 and Asn482.

The protein belongs to the TPP enzyme family. As to quaternary structure, dimer of large and small chains. Mg(2+) serves as cofactor. It depends on thiamine diphosphate as a cofactor.

It is found in the plastid. The protein resides in the chloroplast. The catalysed reaction is 2 pyruvate + H(+) = (2S)-2-acetolactate + CO2. It participates in amino-acid biosynthesis; L-isoleucine biosynthesis; L-isoleucine from 2-oxobutanoate: step 1/4. It functions in the pathway amino-acid biosynthesis; L-valine biosynthesis; L-valine from pyruvate: step 1/4. The chain is Acetolactate synthase large subunit (ilvB) from Porphyra purpurea (Red seaweed).